A 513-amino-acid polypeptide reads, in one-letter code: Na(+)/H(+) antiporter NhaB (513 aa).

11 helical membrane passes run 21 to 41, 88 to 108, 119 to 139, 143 to 163, 208 to 228, 247 to 267, 303 to 323, 357 to 377, 389 to 409, 447 to 467, and 477 to 497; these read ITIV…SPFI, IIAN…IYFM, LLLS…SAAF, FLDA…FYGV, VGTA…LIIA, LPVL…GVFG, ALIG…VGII, LVVF…APII, LALF…VFVA, ATPN…APLI, and MALP…EYIL.

Belongs to the NhaB Na(+)/H(+) (TC 2.A.34) antiporter family.

Its subcellular location is the cell inner membrane. It catalyses the reaction 2 Na(+)(in) + 3 H(+)(out) = 2 Na(+)(out) + 3 H(+)(in). Functionally, na(+)/H(+) antiporter that extrudes sodium in exchange for external protons. The sequence is that of Na(+)/H(+) antiporter NhaB from Pasteurella multocida (strain Pm70).